The chain runs to 231 residues: Phosphoglycolate phosphatase (231 aa).

Catalysis depends on Asp9, which acts as the Nucleophile. Mg(2+) is bound by residues Asp9 and Asp11. Lys154 lines the substrate pocket. Asp177 and Asp181 together coordinate Mg(2+).

It belongs to the archaeal SPP-like hydrolase family. It depends on Mg(2+) as a cofactor.

The enzyme catalyses 2-phosphoglycolate + H2O = glycolate + phosphate. Its function is as follows. Catalyzes the dephosphorylation of 2-phosphoglycolate. The sequence is that of Phosphoglycolate phosphatase from Nitrosopumilus maritimus (strain SCM1).